The primary structure comprises 201 residues: Histidine biosynthesis bifunctional protein HisIE (201 aa).

The interval 1-111 (MKINWQKVDN…EKTTQPDWIF (111 aa)) is phosphoribosyl-AMP cyclohydrolase. Residues 112–201 (LSKLERLIAS…IHKLKERHTK (90 aa)) form a phosphoribosyl-ATP pyrophosphohydrolase region.

This sequence in the N-terminal section; belongs to the PRA-CH family. It in the C-terminal section; belongs to the PRA-PH family.

Its subcellular location is the cytoplasm. It carries out the reaction 1-(5-phospho-beta-D-ribosyl)-ATP + H2O = 1-(5-phospho-beta-D-ribosyl)-5'-AMP + diphosphate + H(+). The catalysed reaction is 1-(5-phospho-beta-D-ribosyl)-5'-AMP + H2O = 1-(5-phospho-beta-D-ribosyl)-5-[(5-phospho-beta-D-ribosylamino)methylideneamino]imidazole-4-carboxamide. Its pathway is amino-acid biosynthesis; L-histidine biosynthesis; L-histidine from 5-phospho-alpha-D-ribose 1-diphosphate: step 2/9. It functions in the pathway amino-acid biosynthesis; L-histidine biosynthesis; L-histidine from 5-phospho-alpha-D-ribose 1-diphosphate: step 3/9. In Pasteurella multocida (strain Pm70), this protein is Histidine biosynthesis bifunctional protein HisIE (hisI).